A 1442-amino-acid chain; its full sequence is Clustered mitochondria protein homolog (1442 aa).

2 disordered regions span residues 38–100 and 237–258; these read NYRN…KKPD and GRSE…KDRP. Basic and acidic residues predominate over residues 82-100; that stretch reads SEGEQQKDKTAAEDKKKPD. A Clu domain is found at 394-636; it reads RAEDTFSSKL…RTFPPDVNFL (243 aa). Composition is skewed to basic and acidic residues over residues 696 to 714 and 737 to 763; these read QKQE…EPKA and ESKE…KVET. Disordered regions lie at residues 696-763 and 949-984; these read QKQE…KVET and SESD…SFQC. Polar residues predominate over residues 949 to 958; it reads SESDALTKSG. 3 TPR repeats span residues 1087-1120, 1213-1246, and 1248-1281; these read AYNF…LNNV, ALLD…NIKY, and GEKS…EKET. Residues 1373-1442 form a disordered region; it reads RQKEGGTSEQ…SSNASAQQVS (70 aa). Low complexity predominate over residues 1380–1390; sequence SEQAAAAQASQ. Over residues 1424-1442 the composition is skewed to polar residues; sequence ASSSKQADNSSNASAQQVS.

The protein belongs to the CLU family.

The protein resides in the cytoplasm. Functionally, mRNA-binding protein involved in proper cytoplasmic distribution of mitochondria. The polypeptide is Clustered mitochondria protein homolog (Aedes aegypti (Yellowfever mosquito)).